The following is a 207-amino-acid chain: 2,3-bisphosphoglycerate-dependent phosphoglycerate mutase (207 aa).

Substrate-binding positions include 10–17 (RHGQSEWN), 23–24 (TG), R62, 89–92 (ERDY), K100, 116–117 (RR), and 160–161 (GN). The active-site Tele-phosphohistidine intermediate is the H11. E89 acts as the Proton donor/acceptor in catalysis.

This sequence belongs to the phosphoglycerate mutase family. BPG-dependent PGAM subfamily. In terms of assembly, homodimer.

The catalysed reaction is (2R)-2-phosphoglycerate = (2R)-3-phosphoglycerate. It participates in carbohydrate degradation; glycolysis; pyruvate from D-glyceraldehyde 3-phosphate: step 3/5. In terms of biological role, catalyzes the interconversion of 2-phosphoglycerate and 3-phosphoglycerate. The sequence is that of 2,3-bisphosphoglycerate-dependent phosphoglycerate mutase from Xanthobacter autotrophicus (strain ATCC BAA-1158 / Py2).